Consider the following 428-residue polypeptide: Enolase (428 aa).

Gln-163 lines the (2R)-2-phosphoglycerate pocket. The active-site Proton donor is the Glu-205. Asp-242, Glu-285, and Asp-312 together coordinate Mg(2+). (2R)-2-phosphoglycerate-binding residues include Lys-337, Arg-366, Ser-367, and Lys-388. The Proton acceptor role is filled by Lys-337.

Belongs to the enolase family. It depends on Mg(2+) as a cofactor.

The protein localises to the cytoplasm. Its subcellular location is the secreted. It is found in the cell surface. The catalysed reaction is (2R)-2-phosphoglycerate = phosphoenolpyruvate + H2O. It participates in carbohydrate degradation; glycolysis; pyruvate from D-glyceraldehyde 3-phosphate: step 4/5. Its function is as follows. Catalyzes the reversible conversion of 2-phosphoglycerate (2-PG) into phosphoenolpyruvate (PEP). It is essential for the degradation of carbohydrates via glycolysis. This Brevibacillus brevis (strain 47 / JCM 6285 / NBRC 100599) protein is Enolase.